A 328-amino-acid chain; its full sequence is Cytochrome c biogenesis protein CcsA (328 aa).

The next 8 membrane-spanning stretches (helical) occupy residues 13–33, 46–66, 73–93, 101–121, 146–166, 234–254, 263–283, and 295–315; these read ISFSVVSIVLTIYFLTLLVNL, GIIITFFGITGLLLTRWIYSG, LYESLIFLSWAFSIIHMVSYF, LNTITAPSVIFIQGFATSGLL, MILGYGALLCGSLLSIALLVI, IISLGFIFLTVGILSGAVWAN, WDPKETWAFITWTIFAIYLHI, and AIVALIGFILIWICYFGVNLL.

Belongs to the CcmF/CycK/Ccl1/NrfE/CcsA family. As to quaternary structure, may interact with Ccs1.

Its subcellular location is the plastid. It is found in the chloroplast thylakoid membrane. Required during biogenesis of c-type cytochromes (cytochrome c6 and cytochrome f) at the step of heme attachment. The chain is Cytochrome c biogenesis protein CcsA from Arabidopsis thaliana (Mouse-ear cress).